Consider the following 637-residue polypeptide: ATP-dependent rRNA helicase SPB4 (637 aa).

A Q motif motif is present at residues 14-42 (WDTLNPPLSEWIRDAVATMGFDQMTPVQA). Residues 45–247 (LPHFMGNKDV…RVGLRNPVKI (203 aa)) form the Helicase ATP-binding domain. 58–65 (AVTGSGKT) contacts ATP. The DEAD box signature appears at 195-198 (DEAD). A Helicase C-terminal domain is found at 283–438 (ALAELLRQLP…TITTSEDDAA (156 aa)). A coiled-coil region spans residues 524–631 (KEKTREQQRK…AAAKQEKDGE (108 aa)). Composition is skewed to basic and acidic residues over residues 535–553 (ALEE…EEFK), 563–576 (SAKH…VERR), 583–618 (RDAE…EKAA), and 625–637 (KQEK…GFDD). The tract at residues 535–637 (ALEEEKSGVK…KDGEFKGFDD (103 aa)) is disordered.

The protein belongs to the DEAD box helicase family. DDX55/SPB4 subfamily. In terms of assembly, component of pre-60S ribosomal complexes.

Its subcellular location is the nucleus. The protein localises to the nucleolus. The catalysed reaction is ATP + H2O = ADP + phosphate + H(+). ATP-binding RNA helicase involved in the biogenesis of 60S ribosomal subunits. Binds 90S pre-ribosomal particles and dissociates from pre-60S ribosomal particles after processing of 27SB pre-rRNA. Required for the normal formation of 18S rRNA through the processing of pre-rRNAs at sites A0, A1 and A2, and the normal formation of 25S and 5.8S rRNAs through the processing of pre-rRNAs at sites C1 and C2. The protein is ATP-dependent rRNA helicase SPB4 of Gibberella zeae (strain ATCC MYA-4620 / CBS 123657 / FGSC 9075 / NRRL 31084 / PH-1) (Wheat head blight fungus).